We begin with the raw amino-acid sequence, 528 residues long: Benzoylformate decarboxylase (528 aa).

N117, L118, and R120 together coordinate Mg(2+). Residues 377 to 460 form a thiamine pyrophosphate binding region; that stretch reads TSTTAQMWQR…VIMNNGTYGA (84 aa). Ca(2+)-binding residues include D428, N455, and T457.

The protein belongs to the TPP enzyme family. As to quaternary structure, homotetramer. Ca(2+) is required as a cofactor. It depends on thiamine diphosphate as a cofactor. The cofactor is Mg(2+).

It carries out the reaction phenylglyoxylate + H(+) = benzaldehyde + CO2. The protein operates within aromatic compound metabolism; (R)-mandelate degradation; benzoate from (R)-mandelate: step 3/4. This is Benzoylformate decarboxylase (mdlC) from Pseudomonas putida (Arthrobacter siderocapsulatus).